A 149-amino-acid polypeptide reads, in one-letter code: Protein RhiC (149 aa).

The signal sequence occupies residues 1–23 (MTATLRAFGWLAAFALTVTFAQG).

It localises to the periplasm. May be involved in plant-microbe interaction. This is Protein RhiC (rhiC) from Rhizobium leguminosarum bv. viciae.